Here is an 868-residue protein sequence, read N- to C-terminus: Translation initiation factor IF-2 (868 aa).

The segment covering 199 to 209 has biased composition (basic and acidic residues); sequence SKKEEVKPEKV. The interval 199–269 is disordered; it reads SKKEEVKPEK…GTEKSDKYRE (71 aa). The span at 249 to 260 shows a compositional bias: basic residues; the sequence is RGGRSKFKKKKG. Residues 368–537 enclose the tr-type G domain; sequence GRAPVVTIMG…LLQSEVLELK (170 aa). A G1 region spans residues 377-384; that stretch reads GHVDHGKT. Position 377–384 (377–384) interacts with GTP; the sequence is GHVDHGKT. Residues 402 to 406 form a G2 region; sequence GITQH. Residues 423–426 are G3; it reads DTPG. GTP-binding positions include 423–427 and 477–480; these read DTPGH and NKMD. The tract at residues 477–480 is G4; the sequence is NKMD. The tract at residues 513-515 is G5; that stretch reads SAK.

The protein belongs to the TRAFAC class translation factor GTPase superfamily. Classic translation factor GTPase family. IF-2 subfamily.

The protein resides in the cytoplasm. In terms of biological role, one of the essential components for the initiation of protein synthesis. Protects formylmethionyl-tRNA from spontaneous hydrolysis and promotes its binding to the 30S ribosomal subunits. Also involved in the hydrolysis of GTP during the formation of the 70S ribosomal complex. In Legionella pneumophila (strain Paris), this protein is Translation initiation factor IF-2.